A 570-amino-acid chain; its full sequence is Sulfite reductase [NADPH] hemoprotein beta-component (570 aa).

[4Fe-4S] cluster-binding residues include Cys-434, Cys-440, Cys-479, and Cys-483. Cys-483 contacts siroheme.

The protein belongs to the nitrite and sulfite reductase 4Fe-4S domain family. As to quaternary structure, alpha(8)-beta(8). The alpha component is a flavoprotein, the beta component is a hemoprotein. Siroheme is required as a cofactor. Requires [4Fe-4S] cluster as cofactor.

It carries out the reaction hydrogen sulfide + 3 NADP(+) + 3 H2O = sulfite + 3 NADPH + 4 H(+). It functions in the pathway sulfur metabolism; hydrogen sulfide biosynthesis; hydrogen sulfide from sulfite (NADPH route): step 1/1. Functionally, component of the sulfite reductase complex that catalyzes the 6-electron reduction of sulfite to sulfide. This is one of several activities required for the biosynthesis of L-cysteine from sulfate. The polypeptide is Sulfite reductase [NADPH] hemoprotein beta-component (Klebsiella pneumoniae subsp. pneumoniae (strain ATCC 700721 / MGH 78578)).